The chain runs to 98 residues: Small ribosomal subunit protein uS17 (98 aa).

This sequence belongs to the universal ribosomal protein uS17 family. Part of the 30S ribosomal subunit.

Functionally, one of the primary rRNA binding proteins, it binds specifically to the 5'-end of 16S ribosomal RNA. This Synechococcus sp. (strain CC9605) protein is Small ribosomal subunit protein uS17.